A 128-amino-acid chain; its full sequence is Keratin-associated protein 2-1 (128 aa).

The segment at C5–P112 is 10 X 5 AA repeats of C-C-[CDPQRWG]-[APRS]-[CIPSTVD].

The protein belongs to the KRTAP type 2 family. Interacts with hair keratins.

In terms of biological role, in the hair cortex, hair keratin intermediate filaments are embedded in an interfilamentous matrix, consisting of hair keratin-associated proteins (KRTAP), which are essential for the formation of a rigid and resistant hair shaft through their extensive disulfide bond cross-linking with abundant cysteine residues of hair keratins. The matrix proteins include the high-sulfur and high-glycine-tyrosine keratins. The sequence is that of Keratin-associated protein 2-1 (KRTAP2-1) from Homo sapiens (Human).